A 270-amino-acid polypeptide reads, in one-letter code: Tryptophan synthase alpha chain (270 aa).

Active-site proton acceptor residues include Glu49 and Asp60.

This sequence belongs to the TrpA family. In terms of assembly, tetramer of two alpha and two beta chains.

The enzyme catalyses (1S,2R)-1-C-(indol-3-yl)glycerol 3-phosphate + L-serine = D-glyceraldehyde 3-phosphate + L-tryptophan + H2O. It participates in amino-acid biosynthesis; L-tryptophan biosynthesis; L-tryptophan from chorismate: step 5/5. In terms of biological role, the alpha subunit is responsible for the aldol cleavage of indoleglycerol phosphate to indole and glyceraldehyde 3-phosphate. The chain is Tryptophan synthase alpha chain from Buchnera aphidicola subsp. Diuraphis noxia.